The following is a 155-amino-acid chain: Vasotocin-neurophysin VT 1 (155 aa).

Positions 1–20 (MPDSTIPLLCVLGLLALSSA) are cleaved as a signal peptide. An intrachain disulfide couples C21 to C26. G29 carries the glycine amide modification. 7 disulfides stabilise this stretch: C41–C85, C44–C58, C52–C75, C59–C65, C92–C105, C99–C117, and C106–C111.

This sequence belongs to the vasopressin/oxytocin family. Seven disulfide bonds are present in neurophysin.

It is found in the secreted. In terms of biological role, vasotocin is probably an antidiuretic hormone. The protein is Vasotocin-neurophysin VT 1 of Oncorhynchus masou (Cherry salmon).